Consider the following 383-residue polypeptide: MTEFWLISAPGEKTCQQTWDKLMTATTRTNNLSTNNKFNIPDLKVGTLDVLVGLSDELAKLDAFVESVVKKVAQYMADVLEDSRDKVQENLLANGVDLVTYVTRFQWDMAKYPIKQSLKNISEIISKQVSQIDNDLKARASAYNNLKGNLQNLERKNAGSLLTRSLADIVKKDDFVLDSEYLITLLVVVPKTNYTDWQRTYETLAEMVVPRSTNLLFEDHDSGLFTVTLFRKAIDDFRHKARENKFTVRDFQYNEEEMKADKEEMTRLSTDKKKQFGPLVRWLKVNFSEAFIAWVHIKALRVFVESVLRYGLPVNFQAMLLQPNKKNMKKLREVLYDLYKHLDSSAAAIIDQSAMDIPGLNLSQQEYYPYVYYKIDCNLLDFK.

Residue T2 is modified to N-acetylthreonine.

The protein belongs to the V-ATPase C subunit family. V-ATPase is a heteromultimeric enzyme made up of two complexes: the ATP-hydrolytic V1 complex and the proton translocation V0 complex. The V1 complex consists of three catalytic AB heterodimers that form a heterohexamer, three peripheral stalks each consisting of EG heterodimers, one central rotor including subunits D and F, and the regulatory subunits C and H. The proton translocation complex V0 consists of the proton transport subunit a, a ring of proteolipid subunits c9c'', rotary subunit d, subunits e and f, and two accessory subunits.

In terms of biological role, subunit of the V1 complex of vacuolar(H+)-ATPase (V-ATPase), a multisubunit enzyme composed of a peripheral complex (V1) that hydrolyzes ATP and a membrane integral complex (V0) that translocates protons. V-ATPase is responsible for acidifying and maintaining the pH of intracellular compartments and in some cell types, is targeted to the plasma membrane, where it is responsible for acidifying the extracellular environment. Subunit C is necessary for the assembly of the catalytic sector of the enzyme and is likely to have a specific function in its catalytic activity. The chain is V-type proton ATPase subunit C 1-A (atp6v1c1a) from Danio rerio (Zebrafish).